The primary structure comprises 288 residues: ATP synthase gamma chain (288 aa).

The protein belongs to the ATPase gamma chain family. As to quaternary structure, F-type ATPases have 2 components, CF(1) - the catalytic core - and CF(0) - the membrane proton channel. CF(1) has five subunits: alpha(3), beta(3), gamma(1), delta(1), epsilon(1). CF(0) has three main subunits: a, b and c.

It is found in the cell inner membrane. Its function is as follows. Produces ATP from ADP in the presence of a proton gradient across the membrane. The gamma chain is believed to be important in regulating ATPase activity and the flow of protons through the CF(0) complex. This chain is ATP synthase gamma chain, found in Rickettsia typhi (strain ATCC VR-144 / Wilmington).